Consider the following 43-residue polypeptide: Lanthionine-containing peptide SapB (43 aa).

The first 21 residues, 1-21 (MALLDLQAMDTPAEDSFGELA), serve as a signal peptide directing secretion. Cross-links (lanthionine (Ser-Cys)) lie at residues 24-31 (SQVSLLVC) and 34-41 (SSLSVVLC). 2,3-didehydroalanine (Ser) occurs at positions 27 and 37.

It belongs to the lanthionine-containing morphogen protein family. Maturation involves the enzymatic conversion of Ser into dehydrated AA and the formation of thioether bonds with cysteine. This is followed by membrane translocation and cleavage of the modified precursor.

Its function is as follows. Lanthionine-containing peptide devoid of antibiotic properties, involved in the formation of aerial mycelium. Suggested to self-assemble at air-water interfaces, thus providing a film of surfactant through which nascent aerial hyphae can emerge. The aerial hyphae differentiate further into spores. This Streptomyces griseus subsp. griseus (strain JCM 4626 / CBS 651.72 / NBRC 13350 / KCC S-0626 / ISP 5235) protein is Lanthionine-containing peptide SapB (ramS).